The following is a 789-amino-acid chain: Kin of IRRE-like protein 1 (789 aa).

The signal sequence occupies residues 1–47 (MTLENRSTCLMTCQSSLLPKKPRFLSQKMWAPHLVVAYLIFVTLALA). N-linked (GlcNAc...) asparagine glycosylation is found at Asn5, Asn78, and Asn172. The Extracellular portion of the chain corresponds to 48–531 (LPGTQTRFSQ…REVLPVGIIA (484 aa)). 5 Ig-like C2-type domains span residues 49–147 (PGTQ…AKLT), 152–248 (PEDT…TSIE), 255–335 (PTVT…TLVN), 340–419 (PRIV…EVPL), and 424–520 (PPII…IQLE). Cys74 and Cys132 are joined by a disulfide. Cystine bridges form between Cys175-Cys232 and Cys276-Cys319. The N-linked (GlcNAc...) asparagine glycan is linked to Asn329. Cys361 and Cys403 are joined by a disulfide. Residues 437 to 439 (RGD) carry the Cell attachment site motif. Residues Cys445 and Cys504 are joined by a disulfide bond. Residue Asn503 is glycosylated (N-linked (GlcNAc...) asparagine). The helical transmembrane segment at 532–552 (GATIGAGILLVFSFAALVFFL) threads the bilayer. The Cytoplasmic segment spans residues 553–789 (YRRRKGSRKD…RFQQRMQTHV (237 aa)). Position 606 is a phosphoserine (Ser606). 2 positions are modified to phosphotyrosine; by FYN: Tyr637 and Tyr638. Phosphotyrosine occurs at positions 654 and 657. The disordered stretch occupies residues 687-713 (RAPASDYGTEPTPSGPSAPGGTDTTSQ). The span at 694 to 712 (GTEPTPSGPSAPGGTDTTS) shows a compositional bias: low complexity. Position 756 is a phosphotyrosine (Tyr756).

This sequence belongs to the immunoglobulin superfamily. As to quaternary structure, interacts with TJP1/ZO-1 and with NPHS2/podocin (via the C-terminus). Interacts with NPHS1/nephrin (via the Ig-like domains); this interaction is dependent on KIRREL1 glycosylation. Homodimer (via the Ig-like domains). Interacts when tyrosine-phosphorylated with GRB2. Post-translationally, phosphorylation probably regulates the interaction with NPHS2. Phosphorylated at Tyr-637 and Tyr-638 by FYN, leading to GRB2 binding. N-glycosylated.

It is found in the cell membrane. Required for proper function of the glomerular filtration barrier. It is involved in the maintenance of a stable podocyte architecture with interdigitating foot processes connected by specialized cell-cell junctions, known as the slit diaphragm. It is a signaling protein that needs the presence of TEC kinases to fully trans-activate the transcription factor AP-1. This is Kin of IRRE-like protein 1 (Kirrel1) from Rattus norvegicus (Rat).